The primary structure comprises 392 residues: DNA-directed RNA polymerase subunit Rpo1C (392 aa).

This sequence belongs to the RNA polymerase beta' chain family. Part of the 13-subunit RNA polymerase complex.

It localises to the cytoplasm. The enzyme catalyses RNA(n) + a ribonucleoside 5'-triphosphate = RNA(n+1) + diphosphate. Functionally, DNA-dependent RNA polymerase (RNAP) catalyzes the transcription of DNA into RNA using the four ribonucleoside triphosphates as substrates. Forms part of the jaw domain. The sequence is that of DNA-directed RNA polymerase subunit Rpo1C from Saccharolobus solfataricus (strain ATCC 35092 / DSM 1617 / JCM 11322 / P2) (Sulfolobus solfataricus).